Reading from the N-terminus, the 876-residue chain is Aspartate--tRNA(Asp/Asn) ligase (876 aa).

The tract at residues 1–278 (MAATDTPWRP…FGFKRAYEGF (278 aa)) is unknown. The segment at 279–876 (MHVYRSHTCG…PKPKKEVKEG (598 aa)) is aspartyl-tRNA synthetase. Residue Glu-453 coordinates L-aspartate. The interval 477–480 (QQFK) is aspartate. L-aspartate-binding residues include Arg-499 and His-729. 499–501 (RDE) is an ATP binding site. Glu-763 provides a ligand contact to ATP. Arg-770 serves as a coordination point for L-aspartate. 815–818 (GVDR) serves as a coordination point for ATP.

Belongs to the class-II aminoacyl-tRNA synthetase family. Type 1 subfamily. As to quaternary structure, homodimer.

The protein localises to the cytoplasm. It carries out the reaction tRNA(Asx) + L-aspartate + ATP = L-aspartyl-tRNA(Asx) + AMP + diphosphate. In terms of biological role, aspartyl-tRNA synthetase with relaxed tRNA specificity since it is able to aspartylate not only its cognate tRNA(Asp) but also tRNA(Asn). Reaction proceeds in two steps: L-aspartate is first activated by ATP to form Asp-AMP and then transferred to the acceptor end of tRNA(Asp/Asn). The protein is Aspartate--tRNA(Asp/Asn) ligase (aspS) of Paramagnetospirillum magneticum (strain ATCC 700264 / AMB-1) (Magnetospirillum magneticum).